The following is a 45-amino-acid chain: Sperm-specific protein Phi-3 (45 aa).

The interval 1-45 is disordered; that stretch reads AKAKRSPRKKKAAVKKSSKSKAKKPKSPKKKKAAKKPAKKAAKKK.

Its subcellular location is the nucleus. The protein resides in the chromosome. Functionally, involved in nuclear basic protein transition: histones are replaced by spermatid specific proteins which are themselves replaced by protamines in late spermatids. This is Sperm-specific protein Phi-3 from Mytilus californianus (California mussel).